Consider the following 204-residue polypeptide: MKFLAILSLSSSALATISSIQLFAKSDDSKVDGLGLYSKHEGAAIDYLFLGKNGADLKYDDEKKQIFQELKTSSITVRQSFTLGGDVYELGATDNFIPVTINKDGTLSFTGDDKVYASKNVNDPYRYSESEYAVSNKKTDDSAPITIVAKFSDDKAAETSGVAQAASSSAGPAQASVSNFEGAAGQNKLSYGVGMAAVVAGLVM.

The N-terminal stretch at 1-15 is a signal peptide; it reads MKFLAILSLSSSALA. The GPI-anchor amidated glycine moiety is linked to residue G182. Residues 183–204 constitute a propeptide, removed in mature form; that stretch reads AAGQNKLSYGVGMAAVVAGLVM.

This sequence belongs to the SRP1/TIP1 family. Post-translationally, the GPI-anchor is attached to the protein in the endoplasmic reticulum and serves to target the protein to the cell surface. There, the glucosamine-inositol phospholipid moiety is cleaved off and the GPI-modified mannoprotein is covalently attached via its lipidless GPI glycan remnant to the 1,6-beta-glucan of the outer cell wall layer. O-glycosylated by PMT1.

The protein resides in the secreted. The protein localises to the cell wall. It localises to the membrane. Component of the cell wall involved in virulence. Does not seem to have a major role in maintaining cell wall integrity but plays a role in the relationship between C.albicans and the host. The polypeptide is Cell wall protein RHD3 (RHD3) (Candida albicans (strain SC5314 / ATCC MYA-2876) (Yeast)).